The chain runs to 152 residues: UPF0266 membrane protein YobD (152 aa).

Transmembrane regions (helical) follow at residues 6–26 (LVLILFIAALLAYALYDQFIM), 45–65 (VDSVIFVGLVAILIYNNVTSH), and 67–87 (AQMTTWLLSALALMGFYIFWI).

Belongs to the UPF0266 family.

It is found in the cell inner membrane. This Salmonella arizonae (strain ATCC BAA-731 / CDC346-86 / RSK2980) protein is UPF0266 membrane protein YobD.